Consider the following 348-residue polypeptide: Beta-hexosaminidase (348 aa).

Substrate contacts are provided by residues D64, R72, R138, and 168 to 169 (KH). H181 functions as the Proton donor/acceptor in the catalytic mechanism. The active-site Nucleophile is D252.

The protein belongs to the glycosyl hydrolase 3 family. NagZ subfamily.

It localises to the cytoplasm. The catalysed reaction is Hydrolysis of terminal non-reducing N-acetyl-D-hexosamine residues in N-acetyl-beta-D-hexosaminides.. It functions in the pathway cell wall biogenesis; peptidoglycan recycling. Plays a role in peptidoglycan recycling by cleaving the terminal beta-1,4-linked N-acetylglucosamine (GlcNAc) from peptide-linked peptidoglycan fragments, giving rise to free GlcNAc, anhydro-N-acetylmuramic acid and anhydro-N-acetylmuramic acid-linked peptides. The polypeptide is Beta-hexosaminidase (Alkalilimnicola ehrlichii (strain ATCC BAA-1101 / DSM 17681 / MLHE-1)).